Consider the following 341-residue polypeptide: Heme A synthase (341 aa).

Transmembrane regions (helical) follow at residues 7–27, 92–112, 118–138, 159–179, 190–210, 253–273, 280–300, and 302–322; these read VTVW…IGGI, LFGR…AITK, MVAK…MGWF, LFLT…CAGV, FFTA…GALV, FLHR…PFWL, LFLA…VSVV, and IFLA…GVHM. His255 is a heme binding site. Residue His308 participates in heme binding.

The protein belongs to the COX15/CtaA family. Type 2 subfamily. Interacts with CtaB. Heme b serves as cofactor.

The protein resides in the cell membrane. It catalyses the reaction Fe(II)-heme o + 2 A + H2O = Fe(II)-heme a + 2 AH2. Its pathway is porphyrin-containing compound metabolism; heme A biosynthesis; heme A from heme O: step 1/1. In terms of biological role, catalyzes the conversion of heme O to heme A by two successive hydroxylations of the methyl group at C8. The first hydroxylation forms heme I, the second hydroxylation results in an unstable dihydroxymethyl group, which spontaneously dehydrates, resulting in the formyl group of heme A. In Anaplasma marginale (strain Florida), this protein is Heme A synthase.